The chain runs to 224 residues: UPF0758 protein CV_3079 (224 aa).

The 123-residue stretch at 102 to 224 folds into the MPN domain; the sequence is ALSSPQQVRD…AESFAERGWL (123 aa). Zn(2+)-binding residues include His-173, His-175, and Asp-186. Positions 173–186 match the JAMM motif motif; that stretch reads HNHPSGVSEPSSAD.

The protein belongs to the UPF0758 family.

The sequence is that of UPF0758 protein CV_3079 from Chromobacterium violaceum (strain ATCC 12472 / DSM 30191 / JCM 1249 / CCUG 213 / NBRC 12614 / NCIMB 9131 / NCTC 9757 / MK).